An 84-amino-acid polypeptide reads, in one-letter code: Small ribosomal subunit protein uS15 (84 aa).

The protein belongs to the universal ribosomal protein uS15 family. Part of the 30S ribosomal subunit. Forms a bridge to the 50S subunit in the 70S ribosome, contacting the 23S rRNA.

One of the primary rRNA binding proteins, it binds directly to 16S rRNA where it helps nucleate assembly of the platform of the 30S subunit by binding and bridging several RNA helices of the 16S rRNA. In terms of biological role, forms an intersubunit bridge (bridge B4) with the 23S rRNA of the 50S subunit in the ribosome. In Fervidobacterium nodosum (strain ATCC 35602 / DSM 5306 / Rt17-B1), this protein is Small ribosomal subunit protein uS15.